The chain runs to 636 residues: Polyglycine hydrolase (636 aa).

Positions 1-22 (MHSLSLRRLLTSVLSLCSCSSA) are cleaved as a signal peptide. Residues Asn30 and Asn151 are each glycosylated (N-linked (GlcNAc...) asparagine). Cys141 and Cys175 form a disulfide bridge. The active site involves Ser363. N-linked (GlcNAc...) asparagine glycosylation is found at Asn383 and Asn481. Residues 512 to 540 (TEDRIVQESKNTGQDPVHPQSAKLVPGPH) are disordered.

This sequence belongs to the peptidase S12 family.

The protein resides in the secreted. The enzyme catalyses a glycyl-glycyl-[protein] + H2O = N-terminal glycyl-[protein] + [protein]-C-terminal glycine. Its function is as follows. Serine-type endopeptidase that cleaves Gly-Gly bonds in the polyglycine linker of host plant class IV chitinases to disrupt their chitin-binding, and thereby plays a role in lowering the defense responses of the host to the fungus. Degrades Z.mays Endochitinase A (CHIA) in vitro, although corn is not its host species. The sequence is that of Polyglycine hydrolase from Fusarium vanettenii (strain ATCC MYA-4622 / CBS 123669 / FGSC 9596 / NRRL 45880 / 77-13-4) (Fusarium solani subsp. pisi).